The primary structure comprises 79 residues: uncharacterized protein (79 aa).

Residues 1–24 form the signal peptide; it reads MNKFLNLIGLAFVLVLCAFSCSNA. In terms of domain architecture, LysM spans 32-78; it reads SWHVAQKGYTCYDMATSCKVTLDQFMRTNKLDNNACKLVQIGRKYCC.

The protein localises to the secreted. This is an uncharacterized protein from Dictyostelium discoideum (Social amoeba).